Reading from the N-terminus, the 37-residue chain is Putative preoptic regulatory factor 1 (37 aa).

2 propeptides span residues 1 to 7 (MPYSLQP) and 18 to 37 (FPLC…PPDL).

The protein belongs to the GnRH family. As to expression, preoptic area and testis.

It localises to the secreted. Its function is as follows. Precursor for a gonadotropin regulatory hormone (GNRH) related decapeptide. This is Putative preoptic regulatory factor 1 (Porf1) from Rattus norvegicus (Rat).